We begin with the raw amino-acid sequence, 392 residues long: 5-azacytidine-induced protein 2 (392 aa).

Residues 1 to 197 (MDALVEDDIC…IELQKAKQTD (197 aa)) are homodimerization. Coiled-coil stretches lie at residues 40–76 (ALVT…LIAR), 102–135 (DRDN…EVEL), and 166–196 (DLKI…AKQT). The tract at residues 216 to 257 (SDNMQHAYWELKREMSNLHLVTQVQAELLRKLKTSTAIKKAC) is interaction with TBK1 and IKBKE. Residues Ser318 and Ser353 each carry the phosphoserine modification. The disordered stretch occupies residues 345 to 365 (EDNSWVFPSPPKSSETAFGET).

Homodimer. Interacts with IKBKE, TBK1 and TICAM1. Interacts with TAX1BP1. Interacts with CALCOCO2. In terms of processing, ubiquitinated via 'Lys-48'-linked polyubiquitination by TRIM38, leading to its degradation.

The protein resides in the cytoplasm. Its function is as follows. Adapter protein which binds TBK1 and IKBKE playing a role in antiviral innate immunity. Activates serine/threonine-protein kinase TBK1 and facilitates its oligomerization. Enhances the phosphorylation of NF-kappa-B p65 subunit RELA by TBK1. Promotes TBK1-induced as well as TNF-alpha or PMA-induced activation of NF-kappa-B. Participates in IFNB promoter activation via TICAM1. The protein is 5-azacytidine-induced protein 2 (AZI2) of Pongo abelii (Sumatran orangutan).